The sequence spans 1506 residues: Phosphatidylinositol 3-kinase C2 domain-containing subunit gamma (1506 aa).

Positions 1–34 (MAYSWQTEPNRTEPQEDGSDTQQFHHTNQHLSSR) are disordered. Polar residues predominate over residues 20–34 (DTQQFHHTNQHLSSR). In terms of domain architecture, PI3K-RBD spans 285 to 371 (DTKFRVKISI…IQLHLQKNRD (87 aa)). The region spanning 541 to 689 (LQSHLSFTVC…SPLTLQIDFP (149 aa)) is the C2 PI3K-type domain. One can recognise a PIK helical domain in the interval 704-880 (RTDHEEPPRE…QELLAALQFC (177 aa)). In terms of domain architecture, PI3K/PI4K catalytic spans 949 to 1227 (DRDACSYFTS…KIKESLECFP (279 aa)). The interval 955–961 (YFTSNAS) is G-loop. Positions 1091-1099 (GVCDRHNDN) are catalytic loop. The segment at 1110–1136 (HIDFGKFLGHAQTFGGIKRDRAPFIFT) is activation loop. The PX domain occupies 1260 to 1372 (LNKTRTIQRV…SFFLSEHIQP (113 aa)). The C2 domain maps to 1381–1506 (DPGENSLDKS…KWYPLGNSII (126 aa)).

The protein belongs to the PI3/PI4-kinase family. In terms of tissue distribution, expressed predominantly in liver. Also found in kidney, lung and lymphoid tissue. Down-regulated in BeF3 cells expressing the BCR-ABL oncogene p185.

The protein resides in the membrane. The catalysed reaction is a 1,2-diacyl-sn-glycero-3-phospho-(1D-myo-inositol 4-phosphate) + ATP = a 1,2-diacyl-sn-glycero-3-phospho-(1D-myo-inositol-3,4-bisphosphate) + ADP + H(+). It carries out the reaction a 1,2-diacyl-sn-glycero-3-phospho-(1D-myo-inositol) + ATP = a 1,2-diacyl-sn-glycero-3-phospho-(1D-myo-inositol-3-phosphate) + ADP + H(+). Functionally, generates phosphatidylinositol 3-phosphate (PtdIns3P) and phosphatidylinositol 3,4-bisphosphate (PtdIns(3,4)P2) that act as second messengers. May play a role in SDF1A-stimulated chemotaxis. This is Phosphatidylinositol 3-kinase C2 domain-containing subunit gamma (Pik3c2g) from Mus musculus (Mouse).